Reading from the N-terminus, the 520-residue chain is Probable E3 ubiquitin-protein ligase XBOS33 (520 aa).

ANK repeat units follow at residues 44-73 (GLNSPLHFAAAKGHLDIVTLLLEKGADVNV), 77-106 (CGQTALMHACRHGHWEVVQMLLLFRCNVTR), 111-140 (SGRTALHFAAHDGLVRCVRLLLADFVPSAP), 185-214 (GGVTALHMAALNGHFDCMQLLIDLGANVSA), and 228-258 (AGSTPLHYAAGGGNAECCQLLLSKGASKLTL). Residues 327-377 (CAVCLERSCSVAAEGCCHEFCIKCALYLCSTSNTRVEFTGPPGSIPCPLCR) form an RING-type zinc finger. The span at 467–479 (QDGSEVQSPQPSH) shows a compositional bias: polar residues. A disordered region spans residues 467–493 (QDGSEVQSPQPSHCASMEMDKREQQDL). Basic and acidic residues predominate over residues 484-493 (EMDKREQQDL).

The catalysed reaction is S-ubiquitinyl-[E2 ubiquitin-conjugating enzyme]-L-cysteine + [acceptor protein]-L-lysine = [E2 ubiquitin-conjugating enzyme]-L-cysteine + N(6)-ubiquitinyl-[acceptor protein]-L-lysine.. The protein operates within protein modification; protein ubiquitination. This is Probable E3 ubiquitin-protein ligase XBOS33 (XBOS33) from Oryza sativa subsp. japonica (Rice).